The sequence spans 1469 residues: Protein BCL9 homolog (1469 aa).

Residues Met1–Gln16 show a composition bias toward polar residues. Disordered stretches follow at residues Met1–Ala131, Ser161–Pro187, Glu200–Asp222, Glu422–Pro442, and Gly454–Ser474. At Ser9 the chain carries Phosphoserine. A Phosphothreonine modification is found at Thr11. Over residues Pro17–Ala34 the composition is skewed to low complexity. Polar residues-rich tracts occupy residues Ser40–Pro60 and Ser90–Leu113. The span at Ser116–Ser130 shows a compositional bias: low complexity. At Ser206 the chain carries Phosphoserine. Thr208 bears the Phosphothreonine mark. Position 210 is a phosphoserine (Ser210). 2 stretches are compositionally biased toward polar residues: residues Glu422–Asp438 and Gly455–Ser474. Positions Ser511–Asn555 are ARM-binding. Disordered stretches follow at residues Gly728–Val830, Cys844–Val913, and Gln961–Asn991. A compositionally biased stretch (low complexity) spans Pro731 to Pro745. Polar residues predominate over residues Ile770–Gln781. Over residues Ser782–Pro796 the composition is skewed to low complexity. 2 stretches are compositionally biased toward polar residues: residues Pro806–Val830 and Cys844–Ser880. Ser883, Ser905, and Ser911 each carry phosphoserine. Over residues Pro904–Val913 the composition is skewed to polar residues.

It belongs to the BCL9 family. Binds to ARM and PYGO.

It localises to the nucleus. In terms of biological role, involved in signal transduction through the Wnt pathway. The polypeptide is Protein BCL9 homolog (lgs) (Drosophila melanogaster (Fruit fly)).